A 478-amino-acid chain; its full sequence is Putative indole-3-acetic acid-amido synthetase GH3.10 (478 aa).

The protein belongs to the IAA-amido conjugating enzyme family.

Its function is as follows. May catalyze the synthesis of indole-3-acetic acid (IAA)-amino acid conjugates, providing a mechanism for the plant to cope with the presence of excess auxin. The chain is Putative indole-3-acetic acid-amido synthetase GH3.10 (GH3.10) from Oryza sativa subsp. japonica (Rice).